The primary structure comprises 175 residues: Calcineurin subunit B (175 aa).

EF-hand domains follow at residues 21–56 (AEIERLKKRFMKLDKDSSGSIDKTEFMSIPGVSANP), 58–88 (AKRIIEVFDEDNSGDVDFQEFITSLSIFSGR), 90–125 (ETDAKLRFAFRIYDIDKDGYISNGELFIVLKIMVGT), and 131–166 (QLQQIVDRTIMENDVDGDGKLSFEEFKKAAETTEVI). Positions 34, 36, 38, 40, 45, 66, 68, 70, 72, 77, 103, 105, 107, 109, 114, 144, 146, 148, 150, and 155 each coordinate Ca(2+).

It belongs to the calcineurin regulatory subunit family. As to quaternary structure, composed of a catalytic subunit (A) and a regulatory subunit (B).

In terms of biological role, regulatory subunit of calcineurin, a calcium-dependent, calmodulin stimulated protein phosphatase. Confers calcium sensitivity. The sequence is that of Calcineurin subunit B (CNB1) from Kluyveromyces lactis (strain ATCC 8585 / CBS 2359 / DSM 70799 / NBRC 1267 / NRRL Y-1140 / WM37) (Yeast).